The chain runs to 257 residues: MYSVCDVVRDAVAQSHLCACPNDKLPQCKGVTKAPPKCSVFHVAKLQDTKFKWKYTLDPLKAQKLSQIDKDIEKDAITLKLIYGIELSPEDLEWWKMQRCLINKKTGAKGGQFANKYLERQDLELLGYSPTPIIGGDFMFTALPDKVLRTIPVAWDRFLNPAMMIFFLIILLCVILGIFYVLVRNTLRRKQKSKQHQMEIKRFIKEKEQDPYIHTSFESWPADPNKKWKDLIPMYEAQGYCMADYRKKLGMPPGPNC.

Helical transmembrane passes span 123–143 and 163–183; these read LELL…FTAL and MMIF…YVLV.

The protein belongs to the asfivirus C257R family.

It is found in the host membrane. The protein localises to the virion. The sequence is that of Transmembrane protein C257L from African swine fever virus (strain Badajoz 1971 Vero-adapted) (Ba71V).